The primary structure comprises 152 residues: Syntaxin-8A (152 aa).

The span at 1–14 (MNNNNNFNSNFNSN) shows a compositional bias: low complexity. A disordered region spans residues 1–22 (MNNNNNFNSNFNSNRISSTQPY). Topologically, residues 1-131 (MNNNNNFNSN…LTQQSKTTGY (131 aa)) are cytoplasmic. The t-SNARE coiled-coil homology domain occupies 60–122 (KRDMEEQDKM…RNTTKNLITL (63 aa)). Residues 132 to 152 (CSAICFLLLVLLVIIILASVL) form a helical; Anchor for type IV membrane protein membrane-spanning segment.

The protein belongs to the syntaxin family. Component of the SNARE complex composed of syn7A, syn8A, vamp7A and vti1A.

The protein localises to the endosome membrane. In terms of biological role, involved in the targeting and/or fusion of transport vesicles to their target membrane during transport of proteins from the early endosome to the lysosome. Required for fusion of late endosomes with lysosomes and homotypic lysosomal fusion. The protein is Syntaxin-8A of Dictyostelium discoideum (Social amoeba).